A 741-amino-acid polypeptide reads, in one-letter code: MMRQGGVMVGARKRWITDWWPNRLNLKILRQNLQNPYGEDYDYVEEVENLDIDAVIRDLKELMRSSQDWWPADFGHYGPLFIRLAWHSAGSYRIFDGRGGARDGSIRFPPRINWPDNINLDKAIRLLWPIKKKYGRKLSWADLIILAGTVAMEDMGVKLFGFALGREDIFEPDESPDWGPEEEMLTAKRGEKEELERPFAATEMGLIYVNPEGPGGNPDPLGSAQEIRVAFRRMGMNDEETVALIAGGHAFGKCHGAGPADYLGPDPSSSPIEMQGLGWKYNYGKGKGSDTFTSGLEVTWSPTPTKFGINYLRILFTYEWELEKSPAGKNQWVAKDAPEIIPDAHDPNKKHRPRMLTADLALRFDPEFSKIARRFLENPEEFEKAFAIAWYKLTHRDMGPKDCYIGKYVPEETFVWQDPLPRRDYELVDEKDVEELKRRILASGLSLSQLVYFAWASASTYRNSDRRGGANGARIRLKPMSVWEVNHPEELKKVIAAYEKIQQEFNEGAKGSEKRISIADLIVLGGIAAVEEAARRAGFSVKVPFIPGRVDAQQEHVDEEFYRVIEPFADGFRNYFRYPERINERDVYTTPEYFLVDKANLLTLTVPEMVVLIGGMRALGANYSHSDYGVLTERPGVLSNDFFVNLLDMSVEWRAADDYRYTFEGYDRKSGELRWRATRVDLILGHHDELRAVAEVYGCDDAKEKFVKDFAAVCAKVMHLDRFDLWRSNRKLYKEITAGLR.

The tryptophyl-tyrosyl-methioninium (Trp-Tyr) (with M-234) cross-link spans 86–208 (WHSAGSYRIF…FAATEMGLIY (123 aa)). Residue H87 is the Proton acceptor of the active site. A cross-link (tryptophyl-tyrosyl-methioninium (Tyr-Met) (with W-86)) is located at residues 208–234 (YVNPEGPGGNPDPLGSAQEIRVAFRRM). H249 contacts heme b.

This sequence belongs to the peroxidase family. Peroxidase/catalase subfamily. As to quaternary structure, homodimer or homotetramer. Heme b serves as cofactor. Post-translationally, formation of the three residue Trp-Tyr-Met cross-link is important for the catalase, but not the peroxidase activity of the enzyme.

It catalyses the reaction H2O2 + AH2 = A + 2 H2O. The enzyme catalyses 2 H2O2 = O2 + 2 H2O. In terms of biological role, bifunctional enzyme with both catalase and broad-spectrum peroxidase activity. Also displays NADH oxidase, INH lyase and isonicotinoyl-NAD synthase activities. The sequence is that of Catalase-peroxidase from Archaeoglobus fulgidus (strain ATCC 49558 / DSM 4304 / JCM 9628 / NBRC 100126 / VC-16).